The sequence spans 795 residues: Phospholipase A-2-activating protein (795 aa).

WD repeat units follow at residues 17–56 (HELDVRGLVCCLYPPGAFVSVSRDRTTRLWAPDSPNRGFT), 63–107 (GHSN…PLYI), 110–148 (GHKDTVCSLSSGKFGTLLSGSWDTTAKVWLNDKCMMTLQ), 149–188 (GHTAAVWAVKILPEQGLMLTGSADKTIKLWKAGRCERTFS), 190–227 (HEDCVRGLAILSETEFLSCANDASIRRWQITGECLGVY), 229–268 (GHTNYIYSISVFPNCRDFVTTAEDRSLRIWKHGECAQTIR), and 270–307 (PAQSIWCCCVLDNGDIVVGASDGIIRVFTEADERTASA). Position 50 is a phosphoserine (S50). In terms of domain architecture, PFU spans 366–465 (QWSVSDGRWI…KGQTLGLGNT (100 aa)). The residue at position 529 (K529) is an N6-acetyllysine. The 262-residue stretch at 533 to 794 (IYFPKKEALT…SECCRLILNL (262 aa)) folds into the PUL domain. 6 ARM repeats span residues 546–588 (ANPT…GNAS), 589–620 (EKPTAQQLQVLWKAINWPEDIVFPALDILRLS), 621–669 (IKHP…CFVS), 670–715 (QAGQ…CFHK), 716–755 (DHNIEGKAQCLSVISTILEVVQDLEATFRLLVALGTLISD), and 756–795 (DSNAIQLAKSLGVDSQIKKYASVSEPAKVSECCRLILNLL).

It belongs to the WD repeat PLAP family. Interacts with ubiquitin. Interacts with UBXN6, VCP and YOD1; may form a complex involved in macroautophagy.

Its subcellular location is the nucleus. The protein localises to the cytoplasm. The protein resides in the synapse. Plays a role in protein ubiquitination, sorting and degradation through its association with VCP. Involved in ubiquitin-mediated membrane proteins trafficking to late endosomes in an ESCRT-dependent manner, and hence plays a role in synaptic vesicle recycling. May play a role in macroautophagy, regulating for instance the clearance of damaged lysosomes. Plays a role in cerebellar Purkinje cell development. Positively regulates cytosolic and calcium-independent phospholipase A2 activities in a tumor necrosis factor alpha (TNF-alpha)- or lipopolysaccharide (LPS)-dependent manner, and hence prostaglandin E2 biosynthesis. In Rattus norvegicus (Rat), this protein is Phospholipase A-2-activating protein (Plaa).